A 352-amino-acid chain; its full sequence is Guanine nucleotide-binding protein alpha-7 subunit (352 aa).

G2 is lipidated: N-myristoyl glycine. C4 is lipidated: S-palmitoyl cysteine. Residues 32-352 (RIIKLLLLGA…AKNLKSMGLC (321 aa)) enclose the G-alpha domain. The interval 35–48 (KLLLLGAGESGKST) is G1 motif. Residues 40 to 47 (GAGESGKS), 174 to 180 (LRTRIKT), 199 to 203 (DVGGQ), 268 to 271 (NKKD), and A324 contribute to the GTP site. Mg(2+) contacts are provided by S47 and T180. The segment at 172–180 (DLLRTRIKT) is G2 motif. The segment at 195-204 (FRVIDVGGQR) is G3 motif. The G4 motif stretch occupies residues 264 to 271 (ILFLNKKD). The G5 motif stretch occupies residues 322 to 327 (TCATDT).

The protein belongs to the G-alpha family. G(i/o/t/z) subfamily. In terms of assembly, g proteins are composed of 3 units; alpha, beta and gamma. The alpha chain contains the guanine nucleotide binding site.

Functionally, guanine nucleotide-binding proteins (G proteins) are involved as modulators or transducers in various transmembrane signaling systems. The protein is Guanine nucleotide-binding protein alpha-7 subunit (gpa-7) of Caenorhabditis briggsae.